The primary structure comprises 333 residues: MDLKALLRKLGNGLRLTADEAYLLGRGILSGSLCDVEVAASLTAMRVRGESPEEVAGFVKMAREFAVRVPLRIEAVDTAGTGGDGAGTINLSTAAAIVAAAAGAKVLKHGNRSASGLFGSADFMEAVGYNLEVGPEKAAELVEKVGFAFVFAPRYHPAFAKVAPVRRALPFRTIFNIVGPLANPGLVKRQLIGVAEERLLEVVAAAAAELGFEHAVVVHGSGVDEVSSEGATTVYEVKRGSLERYQIAPEDLGAPRVPIPRASDKEEAVAKALAGLRGELREASVAIALNAAFALYVAGVVGDPRDGFELAMRAIQEGVAYRKLVEAVEASRT.

5-phospho-alpha-D-ribose 1-diphosphate-binding positions include G80, 83-84, T88, 90-93, 108-116, and S120; these read GD, NLST, and KHGNRSASG. G80 provides a ligand contact to anthranilate. S92 lines the Mg(2+) pocket. N111 serves as a coordination point for anthranilate. R166 is a binding site for anthranilate. Residues D224 and E225 each contribute to the Mg(2+) site.

The protein belongs to the anthranilate phosphoribosyltransferase family. Homodimer. The cofactor is Mg(2+).

It carries out the reaction N-(5-phospho-beta-D-ribosyl)anthranilate + diphosphate = 5-phospho-alpha-D-ribose 1-diphosphate + anthranilate. It functions in the pathway amino-acid biosynthesis; L-tryptophan biosynthesis; L-tryptophan from chorismate: step 2/5. Catalyzes the transfer of the phosphoribosyl group of 5-phosphorylribose-1-pyrophosphate (PRPP) to anthranilate to yield N-(5'-phosphoribosyl)-anthranilate (PRA). The protein is Anthranilate phosphoribosyltransferase of Pyrobaculum arsenaticum (strain DSM 13514 / JCM 11321 / PZ6).